We begin with the raw amino-acid sequence, 86 residues long: Anti-adapter protein IraP (86 aa).

Residues 1–36 (MKNLIAELLFKLAQKEEESKELCAQVEALEIIVTAM) adopt a coiled-coil conformation.

The protein belongs to the IraP family. Interacts with RssB.

The protein localises to the cytoplasm. Its function is as follows. Inhibits RpoS proteolysis by regulating RssB activity, thereby increasing the stability of the sigma stress factor RpoS especially during phosphate starvation, but also in stationary phase and during nitrogen starvation. Its effect on RpoS stability is due to its interaction with RssB, which probably blocks the interaction of RssB with RpoS, and the consequent delivery of the RssB-RpoS complex to the ClpXP protein degradation pathway. The chain is Anti-adapter protein IraP from Shigella sonnei (strain Ss046).